A 151-amino-acid chain; its full sequence is Chaperonin GroEL (151 aa).

41–45 (DGTTT) provides a ligand contact to ATP.

This sequence belongs to the chaperonin (HSP60) family. As to quaternary structure, forms a cylinder of 14 subunits composed of two heptameric rings stacked back-to-back. Interacts with the co-chaperonin GroES.

The protein localises to the cytoplasm. The catalysed reaction is ATP + H2O + a folded polypeptide = ADP + phosphate + an unfolded polypeptide.. In terms of biological role, together with its co-chaperonin GroES, plays an essential role in assisting protein folding. The GroEL-GroES system forms a nano-cage that allows encapsulation of the non-native substrate proteins and provides a physical environment optimized to promote and accelerate protein folding. The polypeptide is Chaperonin GroEL (Mycolicibacterium fortuitum (Mycobacterium fortuitum)).